A 244-amino-acid chain; its full sequence is Claudin-12 (244 aa).

Residues 1-10 (MGCRDVHAAT) are Cytoplasmic-facing. Residues 11–31 (VLSFLCGIASVAGLFAGTLLP) form a helical membrane-spanning segment. The Extracellular segment spans residues 32–87 (NWRKLRLITFNRNEKNLTVYTGLWVKCARYDGSSDCLMYDTTWYSSVDQLDLRVLQ). Residues 88–108 (FALPLSMLIAMGALLLCLIGM) form a helical membrane-spanning segment. Residues 109–135 (CNTAFRSSVPNIKLAKCLVNSAGCHLV) are Cytoplasmic-facing. Residues 136–156 (AGLLFFLAGTVSLSPSIWVIF) form a helical membrane-spanning segment. At 157–174 (YNIHLNKKFEPVFSFDYA) the chain is on the extracellular side. The chain crosses the membrane as a helical span at residues 175 to 195 (VYVTIASAGGLFMTSLILFIW). Topologically, residues 196–244 (YCTCKSLPSPFWQPLYSHPPSMHTYSQPYSARSRLSAIEIDIPVVSHTT) are cytoplasmic. Residues S228 and S231 each carry the phosphoserine modification.

It belongs to the claudin family. Interacts with OCLN.

The protein localises to the cell junction. It localises to the tight junction. The protein resides in the cell membrane. Plays a major role in tight junction-specific obliteration of the intercellular space, through calcium-independent cell-adhesion activity. This chain is Claudin-12 (CLDN12), found in Pongo abelii (Sumatran orangutan).